Here is a 333-residue protein sequence, read N- to C-terminus: Probable tRNA pseudouridine synthase B (333 aa).

Asp71 (nucleophile) is an active-site residue. The PUA domain occupies 238–313 (LPKIWVRDSA…LVARTDRVVM (76 aa)).

This sequence belongs to the pseudouridine synthase TruB family. Type 2 subfamily.

It carries out the reaction uridine(55) in tRNA = pseudouridine(55) in tRNA. Could be responsible for synthesis of pseudouridine from uracil-55 in the psi GC loop of transfer RNAs. The sequence is that of Probable tRNA pseudouridine synthase B from Pyrobaculum calidifontis (strain DSM 21063 / JCM 11548 / VA1).